The sequence spans 422 residues: Osteomodulin (422 aa).

The N-terminal stretch at 1-20 is a signal peptide; it reads MGFSSLVCVLFFFLGVKVYC. Positions 21-27 are excised as a propeptide; the sequence is QYESYQW. Tyr22, Tyr25, Tyr31, Tyr39, Tyr51, and Tyr77 each carry sulfotyrosine. Positions 53-91 constitute an LRRNT domain; that stretch reads APFHQHTLGCASECFCPPNFPSSMYCDNRKLKTIPNIPA. LRR repeat units lie at residues 92–113, 116–129, 142–164, 165–184, 187–207, 213–233, 234–255, 258–280, 281–294, 301–322, and 331–353; these read HIQQ…SFIN, HLKE…KIKS, NLLQ…PKSL, ERIF…AVNG, NLTM…QEKV, KLMQ…GLPS, SLMY…YFNK, KLHA…FNLS, NLIE…KLKQ, NLEH…VMCP, and HLTH…IFLC. 2 N-linked (GlcNAc...) asparagine glycosylation sites follow: Asn113 and Asn121. Asn187 carries an N-linked (GlcNAc...) asparagine glycan. Residues Asn242 and Asn278 are each glycosylated (N-linked (GlcNAc...) asparagine). Asn316 carries an N-linked (GlcNAc...) asparagine glycan. A disulfide bridge links Cys321 with Cys353. The segment at 385–422 is disordered; that stretch reads DDGDSEDHDDHHEGPEEEGTEENIDAHYYGSQEWQETI. A sulfotyrosine mark is found at Tyr412 and Tyr413.

This sequence belongs to the small leucine-rich proteoglycan (SLRP) family. SLRP class II subfamily. Binds the alpha(V)beta(3)-integrin. The N-terminus is blocked. Post-translationally, glycosylated; contains keratan sulfate. In terms of processing, sulfated on tyrosine residue(s). In terms of tissue distribution, bone specific (at protein level).

It is found in the secreted. The protein localises to the extracellular space. It localises to the extracellular matrix. May be implicated in biomineralization processes. Has a function in binding of osteoblasts via the alpha(V)beta(3)-integrin. In Bos taurus (Bovine), this protein is Osteomodulin (OMD).